Reading from the N-terminus, the 389-residue chain is tRNA-specific 2-thiouridylase MnmA (389 aa).

ATP contacts are provided by residues 35 to 42 (GMSGGVDS) and M61. Residues 121-123 (NPD) form an interaction with target base in tRNA region. C126 functions as the Nucleophile in the catalytic mechanism. Cysteines 126 and 223 form a disulfide. An ATP-binding site is contributed by G151. Residues 173-175 (KDQ) form an interaction with tRNA region. C223 acts as the Cysteine persulfide intermediate in catalysis. The tract at residues 335–336 (RY) is interaction with tRNA.

The protein belongs to the MnmA/TRMU family.

It localises to the cytoplasm. It catalyses the reaction S-sulfanyl-L-cysteinyl-[protein] + uridine(34) in tRNA + AH2 + ATP = 2-thiouridine(34) in tRNA + L-cysteinyl-[protein] + A + AMP + diphosphate + H(+). Catalyzes the 2-thiolation of uridine at the wobble position (U34) of tRNA, leading to the formation of s(2)U34. The chain is tRNA-specific 2-thiouridylase MnmA from Actinobacillus pleuropneumoniae serotype 5b (strain L20).